The following is a 372-amino-acid chain: MHNQAPIQRRKSTRIYVGNVPIGDGAPIAVQSMTNTRTTDVEATVNQIKALERVGADIVRVSVPTMDAAEAFKLIKQQVNVPLVADIHFDYRIALKVAEYGVDCLRINPGNIGNEERIRMVVDCARDKNIPIRIGVNAGSLEKDLQEKYGEPTPQALLESAMRHVDHLDRLNFDQFKVSVKASDVFLAVESYRLLAKQIDQPLHLGITEAGGARSGAVKSAIGLGLLLSEGIGDTLRVSLAADPVEEIKVGFDILKSLRIRARGINFIACPTCSRQEFDVIGTVNALEQRLEDIITPMDVSIIGCVVNGPGEALVSTLGVTGGNKKSGLYEDGVRKDRLDNDDMIAQLESRIRAKASQLDEARRIDVLQVEK.

Residues Cys-270, Cys-273, Cys-305, and Glu-312 each contribute to the [4Fe-4S] cluster site.

This sequence belongs to the IspG family. Requires [4Fe-4S] cluster as cofactor.

The enzyme catalyses (2E)-4-hydroxy-3-methylbut-2-enyl diphosphate + oxidized [flavodoxin] + H2O + 2 H(+) = 2-C-methyl-D-erythritol 2,4-cyclic diphosphate + reduced [flavodoxin]. The protein operates within isoprenoid biosynthesis; isopentenyl diphosphate biosynthesis via DXP pathway; isopentenyl diphosphate from 1-deoxy-D-xylulose 5-phosphate: step 5/6. Converts 2C-methyl-D-erythritol 2,4-cyclodiphosphate (ME-2,4cPP) into 1-hydroxy-2-methyl-2-(E)-butenyl 4-diphosphate. This chain is 4-hydroxy-3-methylbut-2-en-1-yl diphosphate synthase (flavodoxin), found in Salmonella choleraesuis (strain SC-B67).